The chain runs to 341 residues: Basic membrane protein B (341 aa).

The N-terminal stretch at 1–14 is a signal peptide; sequence MRIAIFIFGILLTS. Residue Cys15 is the site of N-palmitoyl cysteine attachment. Cys15 carries the S-diacylglycerol cysteine lipid modification.

The protein belongs to the BMP lipoprotein family. As to quaternary structure, monomer.

It is found in the cell inner membrane. Its function is as follows. May be part of an ABC-type nucleoside uptake system involved in the purine salvage pathway. The sequence is that of Basic membrane protein B (bmpB) from Borreliella afzelii (strain PKo) (Borrelia afzelii).